The chain runs to 571 residues: Septation ring formation regulator EzrA (571 aa).

Residues 1–3 lie on the Extracellular side of the membrane; it reads MYY. A helical transmembrane segment spans residues 4–22; sequence MLIGFIIVVIAVIGAGYIL. The Cytoplasmic portion of the chain corresponds to 23–571; the sequence is KRKHYQRINE…ESKVSVDDIE (549 aa). 4 coiled-coil regions span residues 248–298, 326–374, 400–437, and 478–529; these read LAQM…DTLE, DALA…ASGE, KFAE…ERER, and RIAE…ENHF.

It belongs to the EzrA family.

It localises to the cell membrane. Its function is as follows. Negative regulator of FtsZ ring formation; modulates the frequency and position of FtsZ ring formation. Inhibits FtsZ ring formation at polar sites. Interacts either with FtsZ or with one of its binding partners to promote depolymerization. In Listeria monocytogenes serotype 4b (strain CLIP80459), this protein is Septation ring formation regulator EzrA.